A 524-amino-acid chain; its full sequence is MKKFDNLGLDNIKEIFHNLSYDELNAHEKANNEGLSTDNDTFCVDTGIFTGRSPKDKYFVKQDPSSKYIAWGKINQPITKELFDKLLTKAKQELSGKKIYVQDAFCGASLQSRKAVRFVTEIAWQAHFVKNMFIRPSQEELENFKADFIVYNACKCINEDYKQDGLNSEVFVIFNVEENIAVIGGTWYGGEMKKGIFSMMNYWLPLENKLSMHCSANVGEKDDVALFFGLSGTGKTTLSTDPKRRLIGDDEHGWDDEGVFNFEGGCYAKTINLDPEHEPEIYGAIKRNALLENVVLRADKSVDYADASKTENTRVSYPIEHIENHEPSLKAGHPKNIIFLSADAFGILPPVSKLSKEQAMYYFLSGYTAKVAGTERGITEPQATFSACFGEPFMPLHPTVYARLLGEKIEKHEVNVYLVNTGWSGGSYGVGKRMSIKATRACINAILDGSIAKCEFENFEVFNLAIPKALEGVESTLLNPINTWLDKNAYAETRDKLAHMFVQNFKRYEDVKEGIEFSKFGPKI.

3 residues coordinate substrate: R52, Y188, and K194. ATP-binding positions include K194, H213, and 229-237 (GLSGTGKTT). Positions 194 and 213 each coordinate Mn(2+). D250 contributes to the Mn(2+) binding site. ATP contacts are provided by E278, R314, and T439. R314 contacts substrate.

This sequence belongs to the phosphoenolpyruvate carboxykinase (ATP) family. It depends on Mn(2+) as a cofactor.

It localises to the cytoplasm. It carries out the reaction oxaloacetate + ATP = phosphoenolpyruvate + ADP + CO2. It participates in carbohydrate biosynthesis; gluconeogenesis. In terms of biological role, involved in the gluconeogenesis. Catalyzes the conversion of oxaloacetate (OAA) to phosphoenolpyruvate (PEP) through direct phosphoryl transfer between the nucleoside triphosphate and OAA. This Campylobacter jejuni subsp. jejuni serotype O:23/36 (strain 81-176) protein is Phosphoenolpyruvate carboxykinase (ATP).